The primary structure comprises 228 residues: MVSFTYLLAAVSAVTGAVAAPNPTKVDAQPPSGLLEKRTSPTTGVNNGFYFSFWTDTPSAVTYTNGNGGQFSMNWNGNRGNHVGGKGWNPGAARTIKYSGDYRPNGNSYLAVYGWTRNPLVEYYIVENFGTYNPSSGAQKKGEINIDGSIYDIAVSTRNCAPSIEGDCKTFQQYWSVRRNKRSSGSVNTGAHFNAWAQAGLRLGSHDYQILAVEGYQSSGQATMTVSG.

The N-terminal stretch at 1–19 is a signal peptide; the sequence is MVSFTYLLAAVSAVTGAVA. Residues 37–227 form the GH11 domain; it reads KRTSPTTGVN…SSGQATMTVS (191 aa). The Nucleophile role is filled by Glu-122. Residue Glu-214 is the Proton donor of the active site.

It belongs to the glycosyl hydrolase 11 (cellulase G) family.

Its subcellular location is the secreted. It catalyses the reaction Endohydrolysis of (1-&gt;4)-beta-D-xylosidic linkages in xylans.. It participates in glycan degradation; xylan degradation. Its activity is regulated as follows. Inhibited by the proteinaceous endoxylanase inhibitor I from T.aestivum (TAXI-I). Its function is as follows. Endo-1,4-beta-xylanase involved in the hydrolysis of xylan, a major structural heterogeneous polysaccharide found in plant biomass representing the second most abundant polysaccharide in the biosphere, after cellulose. Plays an important role in causing fusarium head blight (FHB) on cereal crops. Induces cell death and hydrogen peroxide accumulation in infected wheat leaves. The polypeptide is Endo-1,4-beta-xylanase B (XYLB) (Gibberella zeae (strain ATCC MYA-4620 / CBS 123657 / FGSC 9075 / NRRL 31084 / PH-1) (Wheat head blight fungus)).